The sequence spans 336 residues: Holliday junction branch migration complex subunit RuvB (336 aa).

A large ATPase domain (RuvB-L) region spans residues 4–184 (ADRLISATGV…FGIVQRLEFY (181 aa)). Residues Ile-23, Arg-24, Gly-65, Lys-68, Thr-69, Thr-70, 131 to 133 (EDY), Arg-174, Tyr-184, and Arg-221 each bind ATP. Residue Thr-69 coordinates Mg(2+). The segment at 185-255 (NVKDLTDIVS…IAARAMDMLD (71 aa)) is small ATPAse domain (RuvB-S). The segment at 258 to 336 (NEGFDFMDRK…HFGLQRPDER (79 aa)) is head domain (RuvB-H). 2 residues coordinate DNA: Arg-313 and Arg-318.

It belongs to the RuvB family. Homohexamer. Forms an RuvA(8)-RuvB(12)-Holliday junction (HJ) complex. HJ DNA is sandwiched between 2 RuvA tetramers; dsDNA enters through RuvA and exits via RuvB. An RuvB hexamer assembles on each DNA strand where it exits the tetramer. Each RuvB hexamer is contacted by two RuvA subunits (via domain III) on 2 adjacent RuvB subunits; this complex drives branch migration. In the full resolvosome a probable DNA-RuvA(4)-RuvB(12)-RuvC(2) complex forms which resolves the HJ.

The protein resides in the cytoplasm. It catalyses the reaction ATP + H2O = ADP + phosphate + H(+). Functionally, the RuvA-RuvB-RuvC complex processes Holliday junction (HJ) DNA during genetic recombination and DNA repair, while the RuvA-RuvB complex plays an important role in the rescue of blocked DNA replication forks via replication fork reversal (RFR). RuvA specifically binds to HJ cruciform DNA, conferring on it an open structure. The RuvB hexamer acts as an ATP-dependent pump, pulling dsDNA into and through the RuvAB complex. RuvB forms 2 homohexamers on either side of HJ DNA bound by 1 or 2 RuvA tetramers; 4 subunits per hexamer contact DNA at a time. Coordinated motions by a converter formed by DNA-disengaged RuvB subunits stimulates ATP hydrolysis and nucleotide exchange. Immobilization of the converter enables RuvB to convert the ATP-contained energy into a lever motion, pulling 2 nucleotides of DNA out of the RuvA tetramer per ATP hydrolyzed, thus driving DNA branch migration. The RuvB motors rotate together with the DNA substrate, which together with the progressing nucleotide cycle form the mechanistic basis for DNA recombination by continuous HJ branch migration. Branch migration allows RuvC to scan DNA until it finds its consensus sequence, where it cleaves and resolves cruciform DNA. The polypeptide is Holliday junction branch migration complex subunit RuvB (Aeromonas salmonicida (strain A449)).